Here is a 449-residue protein sequence, read N- to C-terminus: Tubulin alpha chain (449 aa).

Residue Gln-11 coordinates GTP. Lys-40 is modified (N6-acetyllysine). GTP-binding residues include Glu-71, Ser-140, Gly-144, Thr-145, Thr-179, Asn-206, and Asn-228. Glu-71 provides a ligand contact to Mg(2+). Glu-254 is an active-site residue.

This sequence belongs to the tubulin family. In terms of assembly, dimer of alpha and beta chains. A typical microtubule is a hollow water-filled tube with an outer diameter of 25 nm and an inner diameter of 15 nM. Alpha-beta heterodimers associate head-to-tail to form protofilaments running lengthwise along the microtubule wall with the beta-tubulin subunit facing the microtubule plus end conferring a structural polarity. Microtubules usually have 13 protofilaments but different protofilament numbers can be found in some organisms and specialized cells. It depends on Mg(2+) as a cofactor. Post-translationally, undergoes a tyrosination/detyrosination cycle, the cyclic removal and re-addition of a C-terminal tyrosine residue by the enzymes tubulin tyrosine carboxypeptidase (TTCP) and tubulin tyrosine ligase (TTL), respectively. Acetylation of alpha chains at Lys-40 stabilizes microtubules and affects affinity and processivity of microtubule motors. This modification has a role in multiple cellular functions, ranging from cell motility, cell cycle progression or cell differentiation to intracellular trafficking and signaling.

The protein resides in the cytoplasm. The protein localises to the cytoskeleton. The enzyme catalyses GTP + H2O = GDP + phosphate + H(+). Functionally, tubulin is the major constituent of microtubules, a cylinder consisting of laterally associated linear protofilaments composed of alpha- and beta-tubulin heterodimers. Microtubules grow by the addition of GTP-tubulin dimers to the microtubule end, where a stabilizing cap forms. Below the cap, tubulin dimers are in GDP-bound state, owing to GTPase activity of alpha-tubulin. The polypeptide is Tubulin alpha chain (Tetrahymena pyriformis).